Reading from the N-terminus, the 743-residue chain is Adhesion defective protein 2 (743 aa).

The disordered stretch occupies residues 1–36 (MADPGLRSGVGLPSQQGQKHDLQKDQKQPHVNNADR). Over residues 18–28 (QKHDLQKDQKQ) the composition is skewed to basic and acidic residues. The 33-residue stretch at 38 to 70 (TQSLLNSYIYDYLIKKDYCEAARAFGREAQVQT) folds into the LisH domain. 4 disordered regions span residues 79–127 (NSLA…PPPP), 264–361 (LQSV…QYPV), 379–426 (RNPH…YGFS), and 476–692 (KERK…KSSD). Phosphoserine is present on S89. The segment covering 98-114 (ISNNESSDENMNVNNGN) has biased composition (polar residues). The span at 264 to 281 (LQSVQQQQKQHQQKKTPQ) shows a compositional bias: low complexity. Polar residues-rich tracts occupy residues 282 to 297 (SGST…QPTT), 315 to 353 (IPSS…DTTG), 390 to 399 (PSSTLPQQQK), 408 to 426 (QQPS…YGFS), and 482 to 500 (TSAS…SSVA). Positions 501-520 (KTKSTTPKSTDTPTEATTSP) are enriched in low complexity. Composition is skewed to polar residues over residues 521-544 (VKVS…NMPM) and 556-566 (DHPSNYSNLIE). Residues 567 to 578 (NSSTSDTNNADN) are compositionally biased toward low complexity. Residues 586–602 (WQLQQTHSSRPTPNASS) are compositionally biased toward polar residues. The span at 612-631 (PSSANSNAPTPAPTVNTTNP) shows a compositional bias: low complexity. The segment covering 661-670 (DNQNQSGKSN) has biased composition (polar residues). Positions 671 to 688 (PDTSATPSAPTESTTVAT) are enriched in low complexity.

Belongs to the FLO8 family.

The protein localises to the cytoplasm. Its subcellular location is the nucleus. In terms of biological role, probable transcriptional regulator involved in cell adhesion. In Schizosaccharomyces pombe (strain 972 / ATCC 24843) (Fission yeast), this protein is Adhesion defective protein 2 (adn2).